Here is a 122-residue protein sequence, read N- to C-terminus: Small ribosomal subunit protein uS13 (122 aa).

Positions 94–122 (KQLPVRGQRTHTNARTRKGKAKPIAGKKK) are disordered.

It belongs to the universal ribosomal protein uS13 family. As to quaternary structure, part of the 30S ribosomal subunit. Forms a loose heterodimer with protein S19. Forms two bridges to the 50S subunit in the 70S ribosome.

Located at the top of the head of the 30S subunit, it contacts several helices of the 16S rRNA. In the 70S ribosome it contacts the 23S rRNA (bridge B1a) and protein L5 of the 50S subunit (bridge B1b), connecting the 2 subunits; these bridges are implicated in subunit movement. Contacts the tRNAs in the A and P-sites. The chain is Small ribosomal subunit protein uS13 from Methylorubrum populi (strain ATCC BAA-705 / NCIMB 13946 / BJ001) (Methylobacterium populi).